The following is a 244-amino-acid chain: MSRRVVALVAAAGKGTRLGADLPKAYVPLRDIPLVVRSVRAMITSAVVDEVIVIISPQMQDYAAALLLRWGLFSADIPVRLVHGGAERADSVWCGLQAIADTDAVVLIHDSARALTPPGMIARVARAVLDGNKAVIPVVPVADTIKTVHGTTVVATPPRRDLRAVQTPQGFDIAALRAANIAYQQQQPDFEATDDASLMEWFGTPVLCVDGDPMAFKVTTPLDYALAKAVTDQAEPTIFEVPSD.

Belongs to the IspD/TarI cytidylyltransferase family. IspD subfamily.

It catalyses the reaction 2-C-methyl-D-erythritol 4-phosphate + CTP + H(+) = 4-CDP-2-C-methyl-D-erythritol + diphosphate. It functions in the pathway isoprenoid biosynthesis; isopentenyl diphosphate biosynthesis via DXP pathway; isopentenyl diphosphate from 1-deoxy-D-xylulose 5-phosphate: step 2/6. Functionally, catalyzes the formation of 4-diphosphocytidyl-2-C-methyl-D-erythritol from CTP and 2-C-methyl-D-erythritol 4-phosphate (MEP). In Corynebacterium diphtheriae (strain ATCC 700971 / NCTC 13129 / Biotype gravis), this protein is 2-C-methyl-D-erythritol 4-phosphate cytidylyltransferase.